The primary structure comprises 353 residues: Photosystem II D2 protein (353 aa).

An N-acetylthreonine modification is found at threonine 2. At threonine 2 the chain carries Phosphothreonine. The chain crosses the membrane as a helical span at residues 41-61 (CAYFAVGGWFTGTTFVTSWYT). Histidine 118 provides a ligand contact to chlorophyll a. Residues 125–141 (GFMLRQFELARSVQLRP) form a helical membrane-spanning segment. Residues glutamine 130 and asparagine 143 each coordinate pheophytin a. The chain crosses the membrane as a helical span at residues 153 to 166 (VFVSVFLIYPLGQS). Chlorophyll a is bound at residue histidine 198. The chain crosses the membrane as a helical span at residues 208-228 (AALLCAIHGATVENTLFEDGD). Residues histidine 215 and phenylalanine 262 each coordinate a plastoquinone. A Fe cation-binding site is contributed by histidine 215. Histidine 269 serves as a coordination point for Fe cation. Residues 279 to 295 (GLWMSALGVVGLALNLR) form a helical membrane-spanning segment.

The protein belongs to the reaction center PufL/M/PsbA/D family. As to quaternary structure, PSII is composed of 1 copy each of membrane proteins PsbA, PsbB, PsbC, PsbD, PsbE, PsbF, PsbH, PsbI, PsbJ, PsbK, PsbL, PsbM, PsbT, PsbX, PsbY, PsbZ, Psb30/Ycf12, at least 3 peripheral proteins of the oxygen-evolving complex and a large number of cofactors. It forms dimeric complexes. Requires The D1/D2 heterodimer binds P680, chlorophylls that are the primary electron donor of PSII, and subsequent electron acceptors. It shares a non-heme iron and each subunit binds pheophytin, quinone, additional chlorophylls, carotenoids and lipids. There is also a Cl(-1) ion associated with D1 and D2, which is required for oxygen evolution. The PSII complex binds additional chlorophylls, carotenoids and specific lipids. as cofactor.

The protein localises to the plastid. Its subcellular location is the chloroplast thylakoid membrane. It catalyses the reaction 2 a plastoquinone + 4 hnu + 2 H2O = 2 a plastoquinol + O2. In terms of biological role, photosystem II (PSII) is a light-driven water:plastoquinone oxidoreductase that uses light energy to abstract electrons from H(2)O, generating O(2) and a proton gradient subsequently used for ATP formation. It consists of a core antenna complex that captures photons, and an electron transfer chain that converts photonic excitation into a charge separation. The D1/D2 (PsbA/PsbD) reaction center heterodimer binds P680, the primary electron donor of PSII as well as several subsequent electron acceptors. D2 is needed for assembly of a stable PSII complex. This chain is Photosystem II D2 protein, found in Lactuca sativa (Garden lettuce).